The chain runs to 369 residues: Gibberellin 3-beta-dioxygenase 2-3 (369 aa).

The Fe2OG dioxygenase domain occupies M205–P306. Positions 229, 231, and 287 each coordinate Fe cation. R297 is an active-site residue.

It belongs to the iron/ascorbate-dependent oxidoreductase family. GA3OX subfamily. L-ascorbate is required as a cofactor. Fe cation serves as cofactor.

The catalysed reaction is gibberellin A20 + 2-oxoglutarate + O2 = gibberellin A1 + succinate + CO2. Its function is as follows. Converts the inactive gibberellin precursors GA9 and GA20 in the bioactives gibberellins GA4 and GA1. In Triticum aestivum (Wheat), this protein is Gibberellin 3-beta-dioxygenase 2-3 (GA3ox2-3).